We begin with the raw amino-acid sequence, 515 residues long: Maturase K (515 aa).

It belongs to the intron maturase 2 family. MatK subfamily.

It is found in the plastid. The protein resides in the chloroplast. Its function is as follows. Usually encoded in the trnK tRNA gene intron. Probably assists in splicing its own and other chloroplast group II introns. This is Maturase K from Pinus roxburghii (Chir pine).